A 93-amino-acid polypeptide reads, in one-letter code: Small ribosomal subunit protein uS19 (93 aa).

It belongs to the universal ribosomal protein uS19 family.

Protein S19 forms a complex with S13 that binds strongly to the 16S ribosomal RNA. The protein is Small ribosomal subunit protein uS19 of Clostridioides difficile (strain 630) (Peptoclostridium difficile).